Consider the following 267-residue polypeptide: Diaminopimelate epimerase (267 aa).

The substrate site is built by Asn15 and Asn66. Cys75 (proton donor) is an active-site residue. Substrate-binding positions include Gly76–Asn77, Asn150, Asn183, and Glu201–Arg202. Cys210 functions as the Proton acceptor in the catalytic mechanism. A substrate-binding site is contributed by Gly211–Thr212.

Belongs to the diaminopimelate epimerase family. In terms of assembly, homodimer.

It is found in the cytoplasm. The catalysed reaction is (2S,6S)-2,6-diaminopimelate = meso-2,6-diaminopimelate. It participates in amino-acid biosynthesis; L-lysine biosynthesis via DAP pathway; DL-2,6-diaminopimelate from LL-2,6-diaminopimelate: step 1/1. Catalyzes the stereoinversion of LL-2,6-diaminopimelate (L,L-DAP) to meso-diaminopimelate (meso-DAP), a precursor of L-lysine and an essential component of the bacterial peptidoglycan. In Bacteroides thetaiotaomicron (strain ATCC 29148 / DSM 2079 / JCM 5827 / CCUG 10774 / NCTC 10582 / VPI-5482 / E50), this protein is Diaminopimelate epimerase.